A 414-amino-acid chain; its full sequence is Esterase FrsA (414 aa).

This sequence belongs to the FrsA family.

The catalysed reaction is a carboxylic ester + H2O = an alcohol + a carboxylate + H(+). Catalyzes the hydrolysis of esters. The chain is Esterase FrsA from Shigella sonnei (strain Ss046).